A 325-amino-acid polypeptide reads, in one-letter code: Putative 1-aminocyclopropane-1-carboxylate deaminase (325 aa).

Lysine 54 is modified (N6-(pyridoxal phosphate)lysine).

Belongs to the ACC deaminase/D-cysteine desulfhydrase family. Pyridoxal 5'-phosphate is required as a cofactor.

The enzyme catalyses 1-aminocyclopropane-1-carboxylate + H2O = 2-oxobutanoate + NH4(+). The protein is Putative 1-aminocyclopropane-1-carboxylate deaminase of Pyrococcus horikoshii (strain ATCC 700860 / DSM 12428 / JCM 9974 / NBRC 100139 / OT-3).